The primary structure comprises 675 residues: Electrogenic aspartate/glutamate antiporter SLC25A13, mitochondrial (675 aa).

The residue at position 2 (Ala2) is an N-acetylalanine. The tract at residues Ala2–Pro295 is regulatory N-terminal domain. Residues Ala2 to Arg331 are Mitochondrial intermembrane-facing. EF-hand domains are found at residues Ser51–Cys86, Ala87–His122, Ile125–Glu157, and Ile158–His193. Ca(2+) contacts are provided by Asp66, Thr68, Asp70, Leu72, and Glu77. The segment at Leu296–Gln311 is linker loop domain. The tract at residues Val321–Gly612 is carrier domain. 3 Solcar repeats span residues Ala326–Lys418, Val426–Ser510, and Val518–Trp606. A helical membrane pass occupies residues Phe332–Ile349. Residues Asp350–Arg392 lie on the Mitochondrial matrix side of the membrane. 2 positions are modified to N6-acetyllysine: Lys353 and Lys372. Residues Gly393–Asn412 traverse the membrane as a helical segment. Over Asp413–Gly435 the chain is Mitochondrial intermembrane. Residues Gly436 to Leu449 traverse the membrane as a helical segment. Topologically, residues Glu450 to Lys484 are mitochondrial matrix. Lys453 is modified (N6-methyllysine). Lys484 bears the N6-acetyllysine; alternate mark. Lys484 carries the post-translational modification N6-succinyllysine; alternate. The chain crosses the membrane as a helical span at residues Gly485–Tyr504. The Mitochondrial intermembrane segment spans residues Ala505–Leu523. Residues Leu524–Ala541 traverse the membrane as a helical segment. Over Asp542–Lys580 the chain is Mitochondrial matrix. The residue at position 580 (Lys580) is an N6-succinyllysine. Residues Gly581–Tyr600 traverse the membrane as a helical segment. The Mitochondrial intermembrane segment spans residues Glu601–Pro675. A C-terminal domain region spans residues Gly613–Pro675. Lys662 is modified (N6-acetyllysine). Phosphoserine is present on Ser666.

It belongs to the mitochondrial carrier (TC 2.A.29) family. As to quaternary structure, homodimer (via N-terminus). In terms of tissue distribution, high levels in liver and low levels in kidney, pancreas, placenta, heart and brain.

The protein resides in the mitochondrion inner membrane. The enzyme catalyses L-aspartate(in) + L-glutamate(out) + H(+)(out) = L-aspartate(out) + L-glutamate(in) + H(+)(in). It catalyses the reaction 3-sulfino-L-alanine(out) + L-glutamate(in) + H(+)(in) = 3-sulfino-L-alanine(in) + L-glutamate(out) + H(+)(out). The catalysed reaction is 3-sulfino-L-alanine(out) + L-aspartate(in) = 3-sulfino-L-alanine(in) + L-aspartate(out). Its activity is regulated as follows. Activated by calcium-binding in the mitochondrial intermembrane space. Inhibited by pyridoxal 5'-phosphate, bathophenathroline, mercurials, diethyl pyrocarbonate and N-ethylmaleimide. Its function is as follows. Mitochondrial electrogenic aspartate/glutamate antiporter that favors efflux of aspartate and entry of glutamate and proton within the mitochondria as part of the malate-aspartate shuttle. Also mediates the uptake of L-cysteinesulfinate (3-sulfino-L-alanine) by mitochondria in exchange of L-glutamate and proton. Can also exchange L-cysteinesulfinate with aspartate in their anionic form without any proton translocation. Lacks transport activity towards gamma-aminobutyric acid (GABA). This is Electrogenic aspartate/glutamate antiporter SLC25A13, mitochondrial from Homo sapiens (Human).